We begin with the raw amino-acid sequence, 387 residues long: 3-ketoacyl-CoA thiolase (387 aa).

Cys91 functions as the Acyl-thioester intermediate in the catalytic mechanism. Residues His343 and Cys373 each act as proton acceptor in the active site.

This sequence belongs to the thiolase-like superfamily. Thiolase family. In terms of assembly, heterotetramer of two alpha chains (FadB) and two beta chains (FadA).

Its subcellular location is the cytoplasm. The enzyme catalyses an acyl-CoA + acetyl-CoA = a 3-oxoacyl-CoA + CoA. It functions in the pathway lipid metabolism; fatty acid beta-oxidation. In terms of biological role, catalyzes the final step of fatty acid oxidation in which acetyl-CoA is released and the CoA ester of a fatty acid two carbons shorter is formed. This Yersinia pseudotuberculosis serotype O:1b (strain IP 31758) protein is 3-ketoacyl-CoA thiolase.